A 298-amino-acid chain; its full sequence is N-acetylmuramic acid 6-phosphate etherase (298 aa).

The SIS domain maps to 55-218 (IHAQVSGGGR…STGLMIKSGK (164 aa)). Catalysis depends on Glu83, which acts as the Proton donor. Glu114 is an active-site residue.

The protein belongs to the GCKR-like family. MurNAc-6-P etherase subfamily. In terms of assembly, homodimer.

The enzyme catalyses N-acetyl-D-muramate 6-phosphate + H2O = N-acetyl-D-glucosamine 6-phosphate + (R)-lactate. It participates in amino-sugar metabolism; 1,6-anhydro-N-acetylmuramate degradation. The protein operates within amino-sugar metabolism; N-acetylmuramate degradation. It functions in the pathway cell wall biogenesis; peptidoglycan recycling. Specifically catalyzes the cleavage of the D-lactyl ether substituent of MurNAc 6-phosphate, producing GlcNAc 6-phosphate and D-lactate. Together with AnmK, is also required for the utilization of anhydro-N-acetylmuramic acid (anhMurNAc) either imported from the medium or derived from its own cell wall murein, and thus plays a role in cell wall recycling. This is N-acetylmuramic acid 6-phosphate etherase from Escherichia coli (strain SMS-3-5 / SECEC).